The following is a 1071-amino-acid chain: Carbamoyl phosphate synthase pyrimidine-specific large chain (1071 aa).

The carboxyphosphate synthetic domain stretch occupies residues 1 to 401 (MPKRVDINKI…SLLKAVRSLE (401 aa)). ATP contacts are provided by arginine 129, arginine 169, glycine 175, glycine 176, lysine 208, isoleucine 210, glutamate 215, glycine 241, isoleucine 242, histidine 243, glutamine 284, and glutamate 298. The ATP-grasp 1 domain occupies 133–327 (RTLMNELNEP…IAKLAAKIAV (195 aa)). Residues glutamine 284, glutamate 298, and asparagine 300 each coordinate Mg(2+). Mn(2+)-binding residues include glutamine 284, glutamate 298, and asparagine 300. Positions 402 to 546 (ADVYHLELKD…YSTYEEENES (145 aa)) are oligomerization domain. A carbamoyl phosphate synthetic domain region spans residues 547–929 (VVTDKKSVMV…ALYKALIASG (383 aa)). The ATP-grasp 2 domain maps to 671–861 (EQALGELGVP…MANLATKIIL (191 aa)). Residues arginine 707, arginine 746, leucine 748, glutamate 752, glycine 777, valine 778, histidine 779, serine 780, glutamine 820, and glutamate 832 each coordinate ATP. 3 residues coordinate Mg(2+): glutamine 820, glutamate 832, and asparagine 834. 3 residues coordinate Mn(2+): glutamine 820, glutamate 832, and asparagine 834. Positions 930-1071 (IQIPNYGSVL…NTNQEAAVTI (142 aa)) constitute an MGS-like domain. The tract at residues 930–1071 (IQIPNYGSVL…NTNQEAAVTI (142 aa)) is allosteric domain.

The protein belongs to the CarB family. In terms of assembly, composed of two chains; the small (or glutamine) chain promotes the hydrolysis of glutamine to ammonia, which is used by the large (or ammonia) chain to synthesize carbamoyl phosphate. Tetramer of heterodimers (alpha,beta)4. Interacts with BrxC. The cofactor is Mg(2+). Mn(2+) serves as cofactor.

It carries out the reaction hydrogencarbonate + L-glutamine + 2 ATP + H2O = carbamoyl phosphate + L-glutamate + 2 ADP + phosphate + 2 H(+). The catalysed reaction is hydrogencarbonate + NH4(+) + 2 ATP = carbamoyl phosphate + 2 ADP + phosphate + 2 H(+). It functions in the pathway amino-acid biosynthesis; L-arginine biosynthesis; carbamoyl phosphate from bicarbonate: step 1/1. The protein operates within pyrimidine metabolism; UMP biosynthesis via de novo pathway; (S)-dihydroorotate from bicarbonate: step 1/3. Functionally, small subunit of the glutamine-dependent carbamoyl phosphate synthetase (CPSase). CPSase catalyzes the formation of carbamoyl phosphate from the ammonia moiety of glutamine, carbonate, and phosphate donated by ATP, constituting the first step of the biosynthetic pathway leading to pyrimidine nucleotides. The large subunit (synthetase) binds the substrates ammonia (free or transferred from glutamine from the small subunit), hydrogencarbonate and ATP and carries out an ATP-coupled ligase reaction, activating hydrogencarbonate by forming carboxy phosphate which reacts with ammonia to form carbamoyl phosphate. The polypeptide is Carbamoyl phosphate synthase pyrimidine-specific large chain (pyrAB) (Bacillus subtilis (strain 168)).